A 306-amino-acid polypeptide reads, in one-letter code: tRNA dimethylallyltransferase 1 (306 aa).

13–20 (GPTASGKT) serves as a coordination point for ATP. 15 to 20 (TASGKT) provides a ligand contact to substrate. The interaction with substrate tRNA stretch occupies residues 38–41 (DSRQ).

It belongs to the IPP transferase family. As to quaternary structure, monomer. Mg(2+) is required as a cofactor.

It carries out the reaction adenosine(37) in tRNA + dimethylallyl diphosphate = N(6)-dimethylallyladenosine(37) in tRNA + diphosphate. Functionally, catalyzes the transfer of a dimethylallyl group onto the adenine at position 37 in tRNAs that read codons beginning with uridine, leading to the formation of N6-(dimethylallyl)adenosine (i(6)A). This chain is tRNA dimethylallyltransferase 1, found in Azobacteroides pseudotrichonymphae genomovar. CFP2.